Consider the following 350-residue polypeptide: Small ribosomal subunit protein uS3 (350 aa).

Positions 38-106 constitute a KH type-2 domain; it reads IRKMMSRGME…QVQLNILEVK (69 aa). Positions 211–350 are disordered; the sequence is AEREAQEALQ…TPGTPEKAEE (140 aa). A compositionally biased stretch (basic residues) spans 222–232; it reads QTRRDRPRRGP. Residues 261 to 350 show a composition bias toward low complexity; that stretch reads NAPAAETAAS…TPGTPEKAEE (90 aa).

It belongs to the universal ribosomal protein uS3 family. In terms of assembly, part of the 30S ribosomal subunit. Forms a tight complex with proteins S10 and S14.

Functionally, binds the lower part of the 30S subunit head. Binds mRNA in the 70S ribosome, positioning it for translation. The chain is Small ribosomal subunit protein uS3 from Frankia alni (strain DSM 45986 / CECT 9034 / ACN14a).